The sequence spans 703 residues: Elongation factor G (703 aa).

In terms of domain architecture, tr-type G spans 9–292 (ERTRNIGIMA…AVVDYLPGPL (284 aa)). GTP-binding positions include 18 to 25 (AHIDAGKT), 91 to 95 (DTPGH), and 145 to 148 (NKMD).

The protein belongs to the TRAFAC class translation factor GTPase superfamily. Classic translation factor GTPase family. EF-G/EF-2 subfamily.

It is found in the cytoplasm. Functionally, catalyzes the GTP-dependent ribosomal translocation step during translation elongation. During this step, the ribosome changes from the pre-translocational (PRE) to the post-translocational (POST) state as the newly formed A-site-bound peptidyl-tRNA and P-site-bound deacylated tRNA move to the P and E sites, respectively. Catalyzes the coordinated movement of the two tRNA molecules, the mRNA and conformational changes in the ribosome. The sequence is that of Elongation factor G from Leuconostoc citreum (strain KM20).